The primary structure comprises 913 residues: Protein translocase subunit SecA (913 aa).

ATP-binding positions include Q87, 105–109 (GEGKT), and D512. C897, C899, C908, and H909 together coordinate Zn(2+).

Belongs to the SecA family. In terms of assembly, monomer and homodimer. Part of the essential Sec protein translocation apparatus which comprises SecA, SecYEG and auxiliary proteins SecDF-YajC and YidC. Zn(2+) serves as cofactor.

Its subcellular location is the cell inner membrane. It localises to the cytoplasm. It catalyses the reaction ATP + H2O + cellular proteinSide 1 = ADP + phosphate + cellular proteinSide 2.. In terms of biological role, part of the Sec protein translocase complex. Interacts with the SecYEG preprotein conducting channel. Has a central role in coupling the hydrolysis of ATP to the transfer of proteins into and across the cell membrane, serving both as a receptor for the preprotein-SecB complex and as an ATP-driven molecular motor driving the stepwise translocation of polypeptide chains across the membrane. The protein is Protein translocase subunit SecA of Pseudomonas syringae pv. syringae (strain B728a).